Here is a 743-residue protein sequence, read N- to C-terminus: Putative cation exchanger C3A12.06c (743 aa).

13 helical membrane-spanning segments follow: residues 13–33 (LILL…HRIS), 109–129 (FPVL…IGIS), 138–158 (LVTI…TFLA), 182–202 (IGEL…SVCL), 213–233 (FLRD…FVLH), 239–258 (IWQS…FVFF), 528–548 (LRLL…ITGG), 551–571 (LYIY…LYYY), 580–600 (FLPW…STIA), 609–629 (ALGV…FAAG), 649–669 (MAMG…IGIS), 690–710 (LSIT…YVPL), and 718–738 (VLGL…IVVE).

This sequence belongs to the Ca(2+):cation antiporter (CaCA) (TC 2.A.19) family.

Its subcellular location is the endoplasmic reticulum membrane. Functionally, putative cation exchanger. The protein is Putative cation exchanger C3A12.06c of Schizosaccharomyces pombe (strain 972 / ATCC 24843) (Fission yeast).